Reading from the N-terminus, the 225-residue chain is Urease accessory protein UreG (225 aa).

Residues 1 to 21 form a disordered region; it reads MHLDHHHESAAAVSADARRPD. A GTP-binding site is contributed by 33-40; sequence GPVGSGKT.

This sequence belongs to the SIMIBI class G3E GTPase family. UreG subfamily. As to quaternary structure, homodimer. UreD, UreF and UreG form a complex that acts as a GTP-hydrolysis-dependent molecular chaperone, activating the urease apoprotein by helping to assemble the nickel containing metallocenter of UreC. The UreE protein probably delivers the nickel.

Its subcellular location is the cytoplasm. Facilitates the functional incorporation of the urease nickel metallocenter. This process requires GTP hydrolysis, probably effectuated by UreG. In Streptomyces coelicolor (strain ATCC BAA-471 / A3(2) / M145), this protein is Urease accessory protein UreG.